We begin with the raw amino-acid sequence, 489 residues long: 3-octaprenyl-4-hydroxybenzoate carboxy-lyase (489 aa).

N172 provides a ligand contact to Mn(2+). Residues 175–177, 189–191, and 194–195 contribute to the prenylated FMN site; these read IYR, RWL, and RG. Position 238 (E238) interacts with Mn(2+). The Proton donor role is filled by D287.

It belongs to the UbiD family. Homohexamer. It depends on prenylated FMN as a cofactor. The cofactor is Mn(2+).

The protein resides in the cell membrane. The enzyme catalyses a 4-hydroxy-3-(all-trans-polyprenyl)benzoate + H(+) = a 2-(all-trans-polyprenyl)phenol + CO2. It functions in the pathway cofactor biosynthesis; ubiquinone biosynthesis. In terms of biological role, catalyzes the decarboxylation of 3-octaprenyl-4-hydroxy benzoate to 2-octaprenylphenol, an intermediate step in ubiquinone biosynthesis. The sequence is that of 3-octaprenyl-4-hydroxybenzoate carboxy-lyase from Psychromonas ingrahamii (strain DSM 17664 / CCUG 51855 / 37).